The sequence spans 371 residues: MMQLSRGQRRWLAAIAVLLIGGFFIARHLMAPVPVNYQTVKVVHRDLQQNVLATGKLDAVRKVDVGAQVSGQLEKLYVEIGDHVKRGQLLAMIDPQQAQNQIKEVEATLQDLNAQRIQAKAELHLATVTLGRQQNLAKLQVVSRQDLDQAVTDLAVKNAKVGTIDAQINKAKASLDTAKINLDYTQISAPMDGDVVQITTLQGQTVIAAQQAPNILTLADMSTMLVQAQVSEADVINLKPGMKASFTVLGDPGKRFSGVLKDILPTPEKVNDAIFYSARFEVPNPDRLLRLQMTAQVSIQLANVDQAVVIPLAALGDELGSNRYQVTVLKEGKEEKREVTIGIRNNVDAQVISGLSVGEDVIVSRGGTGDA.

The Cytoplasmic portion of the chain corresponds to 1–10 (MMQLSRGQRR). Residues 11-31 (WLAAIAVLLIGGFFIARHLMA) form a helical membrane-spanning segment. At 32–371 (PVPVNYQTVK…IVSRGGTGDA (340 aa)) the chain is on the periplasmic side. The stretch at 94-127 (DPQQAQNQIKEVEATLQDLNAQRIQAKAELHLAT) forms a coiled coil.

It belongs to the membrane fusion protein (MFP) (TC 8.A.1) family. Homohexamer. Part of the tripartite efflux system MacAB-TolC, which is composed of an inner membrane transporter, MacB, a periplasmic membrane fusion protein, MacA, and an outer membrane component, TolC. The complex forms a large protein conduit and can translocate molecules across both the inner and outer membranes. MacA interacts with MacB and TolC.

The protein resides in the cell inner membrane. Its function is as follows. Part of the tripartite efflux system MacAB-TolC. MacA stimulates the ATPase activity of MacB by promoting the closed ATP-bound state of MacB, increases the capacity of MacB to bind macrolides such as erythromycin, and provides a physical link between MacB and TolC. Confers resistance against macrolides. This is Macrolide export protein MacA (macA) from Yersinia pestis.